The primary structure comprises 93 residues: CRISPR-associated endoribonuclease Cas2 2 (93 aa).

Residue Asp9 coordinates Mg(2+).

The protein belongs to the CRISPR-associated endoribonuclease Cas2 protein family. Homodimer, forms a heterotetramer with a Cas1 homodimer. The cofactor is Mg(2+).

Its function is as follows. CRISPR (clustered regularly interspaced short palindromic repeat), is an adaptive immune system that provides protection against mobile genetic elements (viruses, transposable elements and conjugative plasmids). CRISPR clusters contain sequences complementary to antecedent mobile elements and target invading nucleic acids. CRISPR clusters are transcribed and processed into CRISPR RNA (crRNA). Functions as a ssRNA-specific endoribonuclease. Involved in the integration of spacer DNA into the CRISPR cassette. The polypeptide is CRISPR-associated endoribonuclease Cas2 2 (Synechocystis sp. (strain ATCC 27184 / PCC 6803 / Kazusa)).